The chain runs to 249 residues: Zinc finger protein CG30 (249 aa).

The RING-type zinc finger occupies 8-66 (CHICCSVGEIKNYFLQPVDAITILPIVELHTCRHQLCVMCVRKIAQRGRDKRVECPMCR).

The polypeptide is Zinc finger protein CG30 (CG30) (Orgyia pseudotsugata (Douglas-fir tussock moth)).